The chain runs to 463 residues: Interstitial collagenase B (463 aa).

An N-terminal signal peptide occupies residues 1 to 17 (MPSLPLLLRLWAASSYS). The propeptide at 18 to 96 (FPVIQDGLQK…PRCGVPDVAP (79 aa)) is activation peptide. Positions 87-94 (PRCGVPDV) match the Cysteine switch motif. C89 contacts Zn(2+). The interval 95–273 (APYAITHNNP…PIQLTDATLD (179 aa)) is metalloprotease. D155 is a binding site for Ca(2+). The Zn(2+) site is built by H165 and D167. D172 and G173 together coordinate Ca(2+). Position 180 (H180) interacts with Zn(2+). Ca(2+) contacts are provided by G187 and G189. A Zn(2+)-binding site is contributed by H193. D195 contacts Ca(2+). H215 is a binding site for Zn(2+). E216 is a catalytic residue. Positions 219 and 225 each coordinate Zn(2+). Cysteines 275 and 463 form a disulfide. Hemopexin repeat units follow at residues 278 to 321 (GLTF…WPNL) and 322 to 368 (PGKF…FGFP). D282 provides a ligand contact to Ca(2+). N370 is a glycosylation site (N-linked (GlcNAc...) asparagine). 2 Hemopexin repeats span residues 371–419 (VTNI…FPGI) and 420–463 (DYKV…WFNC). The Ca(2+) site is built by D375 and D424.

Belongs to the peptidase M10A family. Requires Ca(2+) as cofactor. Zn(2+) is required as a cofactor.

It localises to the secreted. The protein localises to the extracellular space. The protein resides in the extracellular matrix. The catalysed reaction is Cleavage of the triple helix of collagen at about three-quarters of the length of the molecule from the N-terminus, at 775-Gly-|-Ile-776 in the alpha1(I) chain. Cleaves synthetic substrates and alpha-macroglobulins at bonds where P1' is a hydrophobic residue.. Its activity is regulated as follows. Can be activated without removal of the activation peptide. The polypeptide is Interstitial collagenase B (Mmp1b) (Mus musculus (Mouse)).